A 358-amino-acid chain; its full sequence is tRNA-specific 2-thiouridylase MnmA (358 aa).

ATP is bound by residues 7 to 14 and Leu-33; that span reads AMSGGVDS. Cys-101 (nucleophile) is an active-site residue. Cysteines 101 and 197 form a disulfide. Residue Gly-125 participates in ATP binding. Positions 147-149 are interaction with tRNA; it reads KDQ. Cys-197 (cysteine persulfide intermediate) is an active-site residue.

This sequence belongs to the MnmA/TRMU family.

Its subcellular location is the cytoplasm. It carries out the reaction S-sulfanyl-L-cysteinyl-[protein] + uridine(34) in tRNA + AH2 + ATP = 2-thiouridine(34) in tRNA + L-cysteinyl-[protein] + A + AMP + diphosphate + H(+). In terms of biological role, catalyzes the 2-thiolation of uridine at the wobble position (U34) of tRNA, leading to the formation of s(2)U34. The chain is tRNA-specific 2-thiouridylase MnmA from Rickettsia prowazekii (strain Madrid E).